The following is a 993-amino-acid chain: Glycogen phosphorylase 2 (993 aa).

The disordered stretch occupies residues 1-82; sequence MEEKRSTNSP…SNQSEDPATQ (82 aa). A compositionally biased stretch (polar residues) spans 19–48; the sequence is RSGSITSATSHPPRSNSNPKLVAKHQQQLY. Positions 58–77 are enriched in low complexity; sequence EQQNQQPQQQQQKQTSNQSE. Residue Lys-763 is modified to N6-(pyridoxal phosphate)lysine. Positions 962–981 are enriched in polar residues; that stretch reads VISGGDKTNNTLKPKQTTKG. Residues 962–993 form a disordered region; it reads VISGGDKTNNTLKPKQTTKGFNIGGQPGNPTN. Over residues 983 to 993 the composition is skewed to gly residues; the sequence is NIGGQPGNPTN.

The protein belongs to the glycogen phosphorylase family. Homodimer. The cofactor is pyridoxal 5'-phosphate. Post-translationally, the N-terminus is blocked. Enzyme activity requires processing of the 113 kDa peptide to an enzymatically active 106 kDa form of the protein. Processing would occur near the middle of the Gln-rich repetitive element.

It catalyses the reaction [(1-&gt;4)-alpha-D-glucosyl](n) + phosphate = [(1-&gt;4)-alpha-D-glucosyl](n-1) + alpha-D-glucose 1-phosphate. In terms of biological role, phosphorylase is an important allosteric enzyme in carbohydrate metabolism. Enzymes from different sources differ in their regulatory mechanisms and in their natural substrates. However, all known phosphorylases share catalytic and structural properties. The protein is Glycogen phosphorylase 2 (glpD) of Dictyostelium discoideum (Social amoeba).